The following is an 852-amino-acid chain: Bifunctional uridylyltransferase/uridylyl-removing enzyme (852 aa).

Positions 1–318 (MPENLSSALE…STPMRVTLRI (318 aa)) are uridylyltransferase. The uridylyl-removing stretch occupies residues 319 to 672 (DDDYIQVNNQ…SRILPQSDSF (354 aa)). Residues 436–558 (VDDHILAVVR…VQTHERLSAL (123 aa)) form the HD domain. ACT domains follow at residues 673–757 (QVMV…SCNR) and 785–852 (SVEI…EQLA).

This sequence belongs to the GlnD family. The cofactor is Mg(2+).

It carries out the reaction [protein-PII]-L-tyrosine + UTP = [protein-PII]-uridylyl-L-tyrosine + diphosphate. The catalysed reaction is [protein-PII]-uridylyl-L-tyrosine + H2O = [protein-PII]-L-tyrosine + UMP + H(+). Its activity is regulated as follows. Uridylyltransferase (UTase) activity is inhibited by glutamine, while glutamine activates uridylyl-removing (UR) activity. Its function is as follows. Modifies, by uridylylation and deuridylylation, the PII regulatory proteins (GlnB and homologs), in response to the nitrogen status of the cell that GlnD senses through the glutamine level. Under low glutamine levels, catalyzes the conversion of the PII proteins and UTP to PII-UMP and PPi, while under higher glutamine levels, GlnD hydrolyzes PII-UMP to PII and UMP (deuridylylation). Thus, controls uridylylation state and activity of the PII proteins, and plays an important role in the regulation of nitrogen assimilation and metabolism. The protein is Bifunctional uridylyltransferase/uridylyl-removing enzyme of Neisseria gonorrhoeae (strain NCCP11945).